The chain runs to 140 residues: Probable transport accessory protein MmpS4 (140 aa).

The chain crosses the membrane as a helical span at residues Leu2–Val22.

This sequence belongs to the MmpS family.

It localises to the cell membrane. The protein is Probable transport accessory protein MmpS4 (mmpS4) of Mycobacterium bovis (strain ATCC BAA-935 / AF2122/97).